The sequence spans 107 residues: uncharacterized protein (107 aa).

The next 3 helical transmembrane spans lie at 20-40, 49-69, and 86-106; these read FISLISSSTSELPLFVVEVGI, PAILSILVLNALEVSSFISTV, and VVMLKILAFLLLEGIIIKLFL.

The protein resides in the membrane. This is an uncharacterized protein from Saccharomyces cerevisiae (strain ATCC 204508 / S288c) (Baker's yeast).